A 312-amino-acid polypeptide reads, in one-letter code: Pantothenate kinase (312 aa).

97 to 104 (GSVAVGKS) is a binding site for ATP.

It belongs to the prokaryotic pantothenate kinase family.

Its subcellular location is the cytoplasm. It catalyses the reaction (R)-pantothenate + ATP = (R)-4'-phosphopantothenate + ADP + H(+). The protein operates within cofactor biosynthesis; coenzyme A biosynthesis; CoA from (R)-pantothenate: step 1/5. This is Pantothenate kinase from Mycobacterium bovis (strain BCG / Pasteur 1173P2).